Here is a 124-residue protein sequence, read N- to C-terminus: Small ribosomal subunit protein uS12 (124 aa).

The tract at residues methionine 1–leucine 24 is disordered. Residues arginine 9–lysine 20 are compositionally biased toward basic residues. Aspartate 89 carries the post-translational modification 3-methylthioaspartic acid. The disordered stretch occupies residues alanine 105–lysine 124. A compositionally biased stretch (basic residues) spans glutamine 112–lysine 124.

Belongs to the universal ribosomal protein uS12 family. As to quaternary structure, part of the 30S ribosomal subunit. Contacts proteins S8 and S17. May interact with IF1 in the 30S initiation complex.

In terms of biological role, with S4 and S5 plays an important role in translational accuracy. Functionally, interacts with and stabilizes bases of the 16S rRNA that are involved in tRNA selection in the A site and with the mRNA backbone. Located at the interface of the 30S and 50S subunits, it traverses the body of the 30S subunit contacting proteins on the other side and probably holding the rRNA structure together. The combined cluster of proteins S8, S12 and S17 appears to hold together the shoulder and platform of the 30S subunit. This chain is Small ribosomal subunit protein uS12, found in Christiangramia forsetii (strain DSM 17595 / CGMCC 1.15422 / KT0803) (Gramella forsetii).